The chain runs to 526 residues: Peptide chain release factor 3 (526 aa).

The 267-residue stretch at 11–277 (SKRRTFAIIS…SLIKWAPSPL (267 aa)) folds into the tr-type G domain. GTP is bound by residues 20-27 (SHPDAGKT), 88-92 (DTPGH), and 142-145 (NKLD).

This sequence belongs to the TRAFAC class translation factor GTPase superfamily. Classic translation factor GTPase family. PrfC subfamily.

The protein localises to the cytoplasm. Increases the formation of ribosomal termination complexes and stimulates activities of RF-1 and RF-2. It binds guanine nucleotides and has strong preference for UGA stop codons. It may interact directly with the ribosome. The stimulation of RF-1 and RF-2 is significantly reduced by GTP and GDP, but not by GMP. The protein is Peptide chain release factor 3 of Buchnera aphidicola subsp. Acyrthosiphon pisum (strain 5A).